The sequence spans 179 residues: Large ribosomal subunit protein uL5 (179 aa).

Belongs to the universal ribosomal protein uL5 family. Part of the 50S ribosomal subunit; part of the 5S rRNA/L5/L18/L25 subcomplex. Contacts the 5S rRNA and the P site tRNA. Forms a bridge to the 30S subunit in the 70S ribosome.

Functionally, this is one of the proteins that bind and probably mediate the attachment of the 5S RNA into the large ribosomal subunit, where it forms part of the central protuberance. In the 70S ribosome it contacts protein S13 of the 30S subunit (bridge B1b), connecting the 2 subunits; this bridge is implicated in subunit movement. Contacts the P site tRNA; the 5S rRNA and some of its associated proteins might help stabilize positioning of ribosome-bound tRNAs. This Exiguobacterium sp. (strain ATCC BAA-1283 / AT1b) protein is Large ribosomal subunit protein uL5.